The chain runs to 59 residues: Large ribosomal subunit protein uL30 (59 aa).

The protein belongs to the universal ribosomal protein uL30 family. Part of the 50S ribosomal subunit.

This Shewanella amazonensis (strain ATCC BAA-1098 / SB2B) protein is Large ribosomal subunit protein uL30.